The following is a 969-amino-acid chain: RNA polymerase-associated protein RapA (969 aa).

Residues 164 to 334 (EVGRRHAPRV…FARLRLLDPD (171 aa)) enclose the Helicase ATP-binding domain. 177 to 184 (DEVGLGKT) contributes to the ATP binding site. The DEAH box motif lies at 280-283 (DEAH). One can recognise a Helicase C-terminal domain in the interval 492–686 (RVNWLLEKVK…ELKSQLEQGR (195 aa)).

This sequence belongs to the SNF2/RAD54 helicase family. RapA subfamily. Interacts with the RNAP. Has a higher affinity for the core RNAP than for the holoenzyme. Its ATPase activity is stimulated by binding to RNAP.

In terms of biological role, transcription regulator that activates transcription by stimulating RNA polymerase (RNAP) recycling in case of stress conditions such as supercoiled DNA or high salt concentrations. Probably acts by releasing the RNAP, when it is trapped or immobilized on tightly supercoiled DNA. Does not activate transcription on linear DNA. Probably not involved in DNA repair. This is RNA polymerase-associated protein RapA from Vibrio parahaemolyticus serotype O3:K6 (strain RIMD 2210633).